The primary structure comprises 508 residues: tRNA(Ile2) 2-agmatinylcytidine synthetase TiaS (508 aa).

The OB DNA-binding region spans 367 to 427 (ITGGHVLIEL…YQLNIEKINV (61 aa)).

This sequence belongs to the TiaS family.

It is found in the cytoplasm. It carries out the reaction cytidine(34) in tRNA(Ile2) + agmatine + ATP + H2O = 2-agmatinylcytidine(34) in tRNA(Ile2) + AMP + 2 phosphate + 2 H(+). Its function is as follows. ATP-dependent agmatine transferase that catalyzes the formation of 2-agmatinylcytidine (agm2C) at the wobble position (C34) of tRNA(Ile2), converting the codon specificity from AUG to AUA. In Methanococcus voltae (strain ATCC BAA-1334 / A3), this protein is tRNA(Ile2) 2-agmatinylcytidine synthetase TiaS.